The primary structure comprises 287 residues: 33 kDa chaperonin (287 aa).

2 cysteine pairs are disulfide-bonded: Cys-231/Cys-233 and Cys-264/Cys-267.

The protein belongs to the HSP33 family. Post-translationally, under oxidizing conditions two disulfide bonds are formed involving the reactive cysteines. Under reducing conditions zinc is bound to the reactive cysteines and the protein is inactive.

It localises to the cytoplasm. Redox regulated molecular chaperone. Protects both thermally unfolding and oxidatively damaged proteins from irreversible aggregation. Plays an important role in the bacterial defense system toward oxidative stress. The polypeptide is 33 kDa chaperonin (Thermosipho melanesiensis (strain DSM 12029 / CIP 104789 / BI429)).